A 291-amino-acid polypeptide reads, in one-letter code: GTPase Era (291 aa).

The region spanning 2–167 (KSGFVSIIGR…LDEIVKYLDK (166 aa)) is the Era-type G domain. Residues 10-17 (GRTNAGKS) form a G1 region. 10-17 (GRTNAGKS) lines the GTP pocket. Positions 36–40 (NATRR) are G2. The tract at residues 57-60 (DTPG) is G3. GTP is bound by residues 57–61 (DTPGL) and 116–119 (NKVD). The G4 stretch occupies residues 116–119 (NKVD). The tract at residues 146–148 (YSS) is G5. The 89-residue stretch at 186–274 (YRDFILESIY…LLKLFVTVKK (89 aa)) folds into the KH type-2 domain.

The protein belongs to the TRAFAC class TrmE-Era-EngA-EngB-Septin-like GTPase superfamily. Era GTPase family. Monomer.

The protein localises to the cytoplasm. The protein resides in the cell inner membrane. In terms of biological role, an essential GTPase that binds both GDP and GTP, with rapid nucleotide exchange. Plays a role in 16S rRNA processing and 30S ribosomal subunit biogenesis and possibly also in cell cycle regulation and energy metabolism. The polypeptide is GTPase Era (Campylobacter jejuni subsp. jejuni serotype O:6 (strain 81116 / NCTC 11828)).